The sequence spans 445 residues: Tubulin beta-3 chain (445 aa).

GTP-binding residues include Gln-11, Glu-69, Ser-138, Gly-142, Thr-143, Gly-144, Asn-204, and Asn-226. Residue Glu-69 coordinates Mg(2+). The disordered stretch occupies residues 425 to 445 (YQDATAEEYDEEEQDGEEEHD). Residues 429–445 (TAEEYDEEEQDGEEEHD) show a composition bias toward acidic residues.

This sequence belongs to the tubulin family. In terms of assembly, dimer of alpha and beta chains. A typical microtubule is a hollow water-filled tube with an outer diameter of 25 nm and an inner diameter of 15 nM. Alpha-beta heterodimers associate head-to-tail to form protofilaments running lengthwise along the microtubule wall with the beta-tubulin subunit facing the microtubule plus end conferring a structural polarity. Microtubules usually have 13 protofilaments but different protofilament numbers can be found in some organisms and specialized cells. It depends on Mg(2+) as a cofactor.

Its subcellular location is the cytoplasm. It localises to the cytoskeleton. Its function is as follows. Tubulin is the major constituent of microtubules, a cylinder consisting of laterally associated linear protofilaments composed of alpha- and beta-tubulin heterodimers. Microtubules grow by the addition of GTP-tubulin dimers to the microtubule end, where a stabilizing cap forms. Below the cap, tubulin dimers are in GDP-bound state, owing to GTPase activity of alpha-tubulin. The polypeptide is Tubulin beta-3 chain (TUBB3) (Zea mays (Maize)).